The primary structure comprises 255 residues: Imidazole glycerol phosphate synthase subunit HisF (255 aa).

Catalysis depends on residues D12 and D131.

The protein belongs to the HisA/HisF family. As to quaternary structure, heterodimer of HisH and HisF.

The protein localises to the cytoplasm. It catalyses the reaction 5-[(5-phospho-1-deoxy-D-ribulos-1-ylimino)methylamino]-1-(5-phospho-beta-D-ribosyl)imidazole-4-carboxamide + L-glutamine = D-erythro-1-(imidazol-4-yl)glycerol 3-phosphate + 5-amino-1-(5-phospho-beta-D-ribosyl)imidazole-4-carboxamide + L-glutamate + H(+). Its pathway is amino-acid biosynthesis; L-histidine biosynthesis; L-histidine from 5-phospho-alpha-D-ribose 1-diphosphate: step 5/9. Functionally, IGPS catalyzes the conversion of PRFAR and glutamine to IGP, AICAR and glutamate. The HisF subunit catalyzes the cyclization activity that produces IGP and AICAR from PRFAR using the ammonia provided by the HisH subunit. In Sphingopyxis alaskensis (strain DSM 13593 / LMG 18877 / RB2256) (Sphingomonas alaskensis), this protein is Imidazole glycerol phosphate synthase subunit HisF.